Consider the following 302-residue polypeptide: uncharacterized protein (302 aa).

An S4 RNA-binding domain is found at 13 to 89 (QTLFKFLKKT…VNLDIVYEDN (77 aa)). The active site involves D141.

The protein belongs to the pseudouridine synthase RluA family.

It carries out the reaction a uridine in RNA = a pseudouridine in RNA. This is an uncharacterized protein from Mycoplasma capricolum subsp. capricolum (strain California kid / ATCC 27343 / NCTC 10154).